The following is a 198-amino-acid chain: Uracil phosphoribosyltransferase homolog (198 aa).

Belongs to the UPRTase family.

It localises to the plastid. Its subcellular location is the chloroplast. The polypeptide is Uracil phosphoribosyltransferase homolog (Pyropia yezoensis (Susabi-nori)).